Consider the following 523-residue polypeptide: Glutamate--cysteine ligase, chloroplastic (523 aa).

A disulfide bond links Cys187 and Cys407.

This sequence belongs to the carboxylate-amine ligase family. Glutamate--cysteine ligase type 2 subfamily. In terms of assembly, homodimer or monomer when oxidized or reduced, respectively. In terms of processing, the Cys-187-Cys-407 disulfide bridge is known to modulate the enzyme activity according to the redox status. The oxidized form constitutes the active enzyme.

The protein localises to the plastid. The protein resides in the chloroplast. It carries out the reaction L-cysteine + L-glutamate + ATP = gamma-L-glutamyl-L-cysteine + ADP + phosphate + H(+). It participates in sulfur metabolism; glutathione biosynthesis; glutathione from L-cysteine and L-glutamate: step 1/2. This is Glutamate--cysteine ligase, chloroplastic (GSH1) from Solanum lycopersicum (Tomato).